A 181-amino-acid polypeptide reads, in one-letter code: Peptidyl-tRNA hydrolase (181 aa).

Y14 is a binding site for tRNA. H19 (proton acceptor) is an active-site residue. Positions 60, 62, and 108 each coordinate tRNA.

This sequence belongs to the PTH family. In terms of assembly, monomer.

Its subcellular location is the cytoplasm. It carries out the reaction an N-acyl-L-alpha-aminoacyl-tRNA + H2O = an N-acyl-L-amino acid + a tRNA + H(+). In terms of biological role, hydrolyzes ribosome-free peptidyl-tRNAs (with 1 or more amino acids incorporated), which drop off the ribosome during protein synthesis, or as a result of ribosome stalling. Functionally, catalyzes the release of premature peptidyl moieties from peptidyl-tRNA molecules trapped in stalled 50S ribosomal subunits, and thus maintains levels of free tRNAs and 50S ribosomes. In Metamycoplasma arthritidis (strain 158L3-1) (Mycoplasma arthritidis), this protein is Peptidyl-tRNA hydrolase.